The primary structure comprises 47 residues: Defensin Tk-AMP-D1.1 (47 aa).

Cystine bridges form between cysteine 3-cysteine 47, cysteine 14-cysteine 34, cysteine 20-cysteine 41, and cysteine 24-cysteine 43.

Its function is as follows. Plant defense peptide. The sequence is that of Defensin Tk-AMP-D1.1 from Triticum kiharae (Wheat).